The following is a 147-amino-acid chain: Plasminogen receptor (KT) (147 aa).

The Extracellular portion of the chain corresponds to 1-52; sequence MGFIFSKSMNENMKNQQEFMVTHARLQLERHLTMQNEMRERQMAMQIAWSRE. A helical membrane pass occupies residues 53–73; sequence FLKYFGTFFGIATISLATGAL. Residues 74-78 are Cytoplasmic-facing; it reads KRKKP. Residues 79–99 form a helical membrane-spanning segment; it reads AFLVPIVPLSFIFTYQYDLGY. Topologically, residues 100-147 are extracellular; sequence GTLLQRMKSEAEDILETEKTKLELPKGLITFESLEKARREQSKLFSDK.

Interacts with PLAT. Interacts with PLAUR. In terms of tissue distribution, expressed in monocytes; detected in differentiated monocytes but not in progenitor cells. Expressed in adrenal medulla and hippocampus.

The protein resides in the cell membrane. Receptor for plasminogen. Regulates urokinase plasminogen activator-dependent and stimulates tissue-type plasminogen activator-dependent cell surface plasminogen activation. Proposed to be part of a local catecholaminergic cell plasminogen activation system that regulates neuroendocrine prohormone processing. Involved in regulation of inflammatory response; regulates monocyte chemotactic migration and matrix metalloproteinase activation, such as of MMP2 and MMP9. The sequence is that of Plasminogen receptor (KT) (Plgrkt) from Mus musculus (Mouse).